The primary structure comprises 1406 residues: DNA-directed RNA polymerase subunit beta' (1406 aa).

Zn(2+) contacts are provided by C70, C72, C85, and C88. 3 residues coordinate Mg(2+): D460, D462, and D464. Residues C814, C888, C895, and C898 each coordinate Zn(2+).

The protein belongs to the RNA polymerase beta' chain family. In terms of assembly, the RNAP catalytic core consists of 2 alpha, 1 beta, 1 beta' and 1 omega subunit. When a sigma factor is associated with the core the holoenzyme is formed, which can initiate transcription. Requires Mg(2+) as cofactor. Zn(2+) serves as cofactor.

It carries out the reaction RNA(n) + a ribonucleoside 5'-triphosphate = RNA(n+1) + diphosphate. DNA-dependent RNA polymerase catalyzes the transcription of DNA into RNA using the four ribonucleoside triphosphates as substrates. The polypeptide is DNA-directed RNA polymerase subunit beta' (Yersinia pseudotuberculosis serotype O:1b (strain IP 31758)).